The primary structure comprises 536 residues: Dual specificity calcium/calmodulin-dependent 3',5'-cyclic nucleotide phosphodiesterase 1B (536 aa).

The disordered stretch occupies residues 1-20 (MELSPRSPPEMLEESDCPSP). Phosphoserine occurs at positions 7 and 15. 2 calmodulin-binding regions span residues 27 to 47 (PSKK…KQLE) and 118 to 141 (EKPK…MFRR). The PDEase domain maps to 146-503 (VGPTYSTAVL…QKWKERAASG (358 aa)). Catalysis depends on histidine 223, which acts as the Proton donor. The Zn(2+) site is built by histidine 227, histidine 263, aspartate 264, and aspartate 370. Aspartate 264 is a Mg(2+) binding site. 2 disordered regions span residues 447-474 (LADE…VGDP) and 494-536 (QKWK…GNLD). Over residues 455-464 (KNQPSFQWRQ) the composition is skewed to polar residues. Phosphoserine occurs at positions 466 and 514.

The protein belongs to the cyclic nucleotide phosphodiesterase family. PDE1 subfamily. Homodimer. Zn(2+) is required as a cofactor. The cofactor is Mg(2+).

It is found in the cytoplasm. It localises to the cytosol. It catalyses the reaction a nucleoside 3',5'-cyclic phosphate + H2O = a nucleoside 5'-phosphate + H(+). The enzyme catalyses 3',5'-cyclic GMP + H2O = GMP + H(+). It carries out the reaction 3',5'-cyclic AMP + H2O = AMP + H(+). Type I PDE are activated by the binding of calmodulin in the presence of Ca(2+). In terms of biological role, cyclic nucleotide phosphodiesterase with a dual specificity for the second messengers cAMP and cGMP, which are key regulators of many important physiological processes. Has a preference for cGMP as a substrate. This Homo sapiens (Human) protein is Dual specificity calcium/calmodulin-dependent 3',5'-cyclic nucleotide phosphodiesterase 1B.